The primary structure comprises 352 residues: Neutral protease 2 homolog ATEG_04941 (352 aa).

An N-terminal signal peptide occupies residues methionine 1–alanine 19. A propeptide spanning residues leucine 20 to arginine 175 is cleaved from the precursor. 2 disulfide bridges follow: cysteine 181/cysteine 253 and cysteine 260/cysteine 278. Histidine 303 provides a ligand contact to Zn(2+). Glutamate 304 is an active-site residue. Histidine 307 and aspartate 318 together coordinate Zn(2+).

It belongs to the peptidase M35 family. Requires Zn(2+) as cofactor.

Its subcellular location is the secreted. The enzyme catalyses Preferential cleavage of bonds with hydrophobic residues in P1'. Also 3-Asn-|-Gln-4 and 8-Gly-|-Ser-9 bonds in insulin B chain.. Functionally, secreted metalloproteinase that allows assimilation of proteinaceous substrates. Shows high activities on basic nuclear substrates such as histone and protamine. The sequence is that of Neutral protease 2 homolog ATEG_04941 from Aspergillus terreus (strain NIH 2624 / FGSC A1156).